An 841-amino-acid chain; its full sequence is Probable alpha-glucuronidase A (841 aa).

The N-terminal stretch at 1-20 (MRGLNLFQLILALLLSMVAA) is a signal peptide. N-linked (GlcNAc...) asparagine glycosylation is found at Asn-51, Asn-76, Asn-85, Asn-149, Asn-222, Asn-279, Asn-310, Asn-343, Asn-450, Asn-465, Asn-527, Asn-576, Asn-682, Asn-723, and Asn-732.

This sequence belongs to the glycosyl hydrolase 67 family.

The protein localises to the secreted. It catalyses the reaction an alpha-D-glucuronoside + H2O = D-glucuronate + an alcohol. Its function is as follows. Alpha-glucuronidase involved in the hydrolysis of xylan, a major structural heterogeneous polysaccharide found in plant biomass representing the second most abundant polysaccharide in the biosphere, after cellulose. Releases 4-O-methylglucuronic acid from xylan. The polypeptide is Probable alpha-glucuronidase A (aguA) (Aspergillus niger (strain ATCC MYA-4892 / CBS 513.88 / FGSC A1513)).